Consider the following 151-residue polypeptide: Protein-export protein SecB (151 aa).

Belongs to the SecB family. In terms of assembly, homotetramer, a dimer of dimers. One homotetramer interacts with 1 SecA dimer.

It is found in the cytoplasm. One of the proteins required for the normal export of preproteins out of the cell cytoplasm. It is a molecular chaperone that binds to a subset of precursor proteins, maintaining them in a translocation-competent state. It also specifically binds to its receptor SecA. The chain is Protein-export protein SecB from Acinetobacter baylyi (strain ATCC 33305 / BD413 / ADP1).